Consider the following 757-residue polypeptide: 5-methyltetrahydropteroyltriglutamate--homocysteine methyltransferase (757 aa).

Residues 15–18 and Lys114 each bind 5-methyltetrahydropteroyltri-L-glutamate; that span reads RELK. L-homocysteine contacts are provided by residues 428-430 and Glu481; that span reads IGS. L-methionine-binding positions include 428 to 430 and Glu481; that span reads IGS. 5-methyltetrahydropteroyltri-L-glutamate contacts are provided by residues 512–513 and Trp558; that span reads RC. An L-homocysteine-binding site is contributed by Asp596. Residue Asp596 coordinates L-methionine. Residue Glu602 participates in 5-methyltetrahydropteroyltri-L-glutamate binding. Zn(2+) is bound by residues His639, Cys641, and Glu663. His692 serves as the catalytic Proton donor. Position 724 (Cys724) interacts with Zn(2+).

The protein belongs to the vitamin-B12 independent methionine synthase family. Zn(2+) serves as cofactor.

It carries out the reaction 5-methyltetrahydropteroyltri-L-glutamate + L-homocysteine = tetrahydropteroyltri-L-glutamate + L-methionine. It participates in amino-acid biosynthesis; L-methionine biosynthesis via de novo pathway; L-methionine from L-homocysteine (MetE route): step 1/1. In terms of biological role, catalyzes the transfer of a methyl group from 5-methyltetrahydrofolate to homocysteine resulting in methionine formation. The polypeptide is 5-methyltetrahydropteroyltriglutamate--homocysteine methyltransferase (Lactococcus lactis subsp. cremoris (strain MG1363)).